We begin with the raw amino-acid sequence, 450 residues long: UDP-N-acetylmuramoylalanine--D-glutamate ligase (450 aa).

115–121 (GTNGKTT) lines the ATP pocket.

Belongs to the MurCDEF family.

The protein resides in the cytoplasm. The catalysed reaction is UDP-N-acetyl-alpha-D-muramoyl-L-alanine + D-glutamate + ATP = UDP-N-acetyl-alpha-D-muramoyl-L-alanyl-D-glutamate + ADP + phosphate + H(+). The protein operates within cell wall biogenesis; peptidoglycan biosynthesis. Its function is as follows. Cell wall formation. Catalyzes the addition of glutamate to the nucleotide precursor UDP-N-acetylmuramoyl-L-alanine (UMA). The protein is UDP-N-acetylmuramoylalanine--D-glutamate ligase of Desulfatibacillum aliphaticivorans.